The following is a 715-amino-acid chain: Methylmalonyl-CoA mutase large subunit (715 aa).

Y70, M73, R77, T80, R82, Y84, and S109 together coordinate (R)-methylmalonyl-CoA. Residues F112 and A134 each coordinate cob(II)alamin. (R)-methylmalonyl-CoA-binding residues include T190 and Q192. Residues V201 and R202 each contribute to the cob(II)alamin site. (R)-methylmalonyl-CoA-binding residues include R202, H239, R278, and S280. Residues G328, E365, A368, G599, H600, D601, R602, S645, L647, G676, and T699 each contribute to the cob(II)alamin site. The 129-residue stretch at 587–715 (QPRIMIAKMG…AKVLEILLEE (129 aa)) folds into the B12-binding domain.

Belongs to the methylmalonyl-CoA mutase family. In terms of assembly, heterodimer of an alpha and a beta chain. The cofactor is adenosylcob(III)alamin.

The catalysed reaction is (R)-methylmalonyl-CoA = succinyl-CoA. Its function is as follows. Catalyzes the isomerization of succinyl-CoA to methylmalonyl-CoA during synthesis of propionate from tricarboxylic acid-cycle intermediates. The polypeptide is Methylmalonyl-CoA mutase large subunit (mutB) (Porphyromonas gingivalis (strain ATCC BAA-308 / W83)).